Reading from the N-terminus, the 406-residue chain is Tubby-like F-box protein 3 (406 aa).

One can recognise an F-box domain in the interval 50–105 (SCWASMPPELLRDVLMRIEQSEDTWPSRKNVVSCAGVCRNWREIVKEIVRVPELSS).

The protein belongs to the TUB family. Ubiquitous at low levels. Not detected in mature siliques.

It localises to the cell membrane. Its subcellular location is the plastid. The protein localises to the nucleus. The protein resides in the nucleoplasm. It is found in the cytoplasm. Functionally, involved in abiotic stress signaling. Tethered to plasma membrane (PM) and probably bound to phosphatidylinositol 4,5-bisphosphate. Abiotic stresses (drought, salt, H(2)O(2)) trigger phospholipase C mediated PM dislogement and plastidial and nucleocytosolic relocation of TULP3. The sequence is that of Tubby-like F-box protein 3 from Arabidopsis thaliana (Mouse-ear cress).